The primary structure comprises 261 residues: Mite allergen Eur m 3 (261 aa).

An N-terminal signal peptide occupies residues 1-18; it reads MVICNAIIVLLLAFNTLA. Residues 19–29 constitute a propeptide that is removed on maturation; that stretch reads NPILPSSPNAT. Positions 30 to 260 constitute a Peptidase S1 domain; the sequence is IVGGQKAKAG…FIDWIDSKRS (231 aa). C54 and C70 are oxidised to a cystine. Catalysis depends on charge relay system residues H69 and D114. 2 cysteine pairs are disulfide-bonded: C181/C198 and C210/C236. Catalysis depends on S214, which acts as the Charge relay system.

Belongs to the peptidase S1 family.

Its subcellular location is the secreted. The chain is Mite allergen Eur m 3 (EURM3) from Euroglyphus maynei (Mayne's house dust mite).